The following is a 1537-amino-acid chain: DNA excision repair protein ERCC-6-like 2 (1537 aa).

The 186-residue stretch at 134-319 folds into the Helicase ATP-binding domain; that stretch reads YRHYIEGRGC…WCVMDWAVPG (186 aa). 147–154 lines the ATP pocket; it reads DDMGLGKT. The DEAH box motif lies at 270–273; that stretch reads DEAH. Residues 510-660 form the Helicase C-terminal domain; it reads VLQQLLNHFR…CVVVGSENAK (151 aa). Disordered regions lie at residues 715-735 and 749-768; these read KGEP…QEPT and SVGH…TSRT. Basic and acidic residues predominate over residues 755 to 764; the sequence is GKTDKHKFSD. The short motif at 772 to 783 is the Atypical PIP-box element; that stretch reads PAQLTLLQCGFS. Disordered regions lie at residues 791 to 811, 833 to 891, and 918 to 948; these read KSDQ…DEQP, SEHQ…EDSD, and EDSE…PNLL. A compositionally biased stretch (basic and acidic residues) spans 834-857; the sequence is EHQKSDNIQTPDEKCVSDKSEKTL. Phosphoserine is present on residues Ser968 and Ser971. Residues 1274–1306 are disordered; it reads VHKKEERVRNKSKEKESLLKENPSNDSTLSCYD. Basic and acidic residues predominate over residues 1276–1292; it reads KKEERVRNKSKEKESLL. Over residues 1295 to 1306 the composition is skewed to polar residues; that stretch reads NPSNDSTLSCYD.

Belongs to the SNF2/RAD54 helicase family. Interacts with NEK6. Interacts (via an atypical PIP-box) with PCNA; this interaction facilitates cenrtomeric localization of ERCC6L2. Interacts with CYREN; this interaction is DNA independent. Interacts with XRCC6 and XRCC5. Phosphorylated by NEK6.

It localises to the nucleus. Its subcellular location is the cytoplasm. It is found in the cytoskeleton. The protein localises to the microtubule organizing center. The protein resides in the centrosome. It localises to the mitochondrion. Its subcellular location is the chromosome. It is found in the centromere. Promotes double-strand break (DSB) end-joining and facilitates programmed recombination by controlling how DNA ends are joined in a spatially oriented manner during repair. Also plays a role in DNA repair by restricting DNA end resection in double strand break (DSB) repair. Facilitates replication of complex DNA regions and regulates the maintenance of chromatin structure. The chain is DNA excision repair protein ERCC-6-like 2 from Mus musculus (Mouse).